The primary structure comprises 379 residues: Stimulator of interferon genes protein (379 aa).

The Cytoplasmic portion of the chain corresponds to 1 to 23; the sequence is MPQDPSTRSSPARLLIPEPRAGR. Residues 24–40 form a helical membrane-spanning segment; it reads ARHAACVLLAVCFVVLF. The Lumenal portion of the chain corresponds to 41–50; that stretch reads LSGEPLAPII. A helical transmembrane segment spans residues 51-75; sequence RSVCTQLAALQLGVLLKGCCCLAEE. The Cytoplasmic portion of the chain corresponds to 76 to 97; it reads IFHLHSRHHGSLWQVLCSCFPP. A helical transmembrane segment spans residues 98–111; it reads RWYLALLLVGGSAY. Residues 112-121 are Lumenal-facing; it reads LDPPEDNGHS. A helical membrane pass occupies residues 122–139; sequence PRLALTLSCLCQLLVLAL. Over 140 to 379 the chain is Cytoplasmic; it reads GLQKLSAVEV…LPQPLRSDCP (240 aa). A cyclic dinucleotide-binding domain (CBD) region spans residues 158 to 345; the sequence is KNVAHGLAWS…WHLQQQQREE (188 aa). Residues serine 167, tyrosine 172, 243–246, and serine 268 each bind 3',3'-c-di-GMP; that span reads RVYK. 2',3'-cGAMP-binding positions include 167-172, 243-246, and serine 268; these read SYYIGY and RVYK. Residues 363 to 366 carry the pLxIS motif motif; that stretch reads LQVS. At serine 366 the chain carries Phosphoserine; by TBK1.

It belongs to the STING family. As to quaternary structure, homodimer; forms a homodimer in absence of cyclic nucleotide (c-di-GMP or cGAMP). Homotetramer; in presence of cyclic nucleotide (c-di-GMP or cGAMP), forms tetramers and higher-order oligomers through side-by-side packing. Interacts (when phosphorylated) with IRF3; following activation and phosphorylation on the pLxIS motif by TBK1, recruits IRF3. Phosphorylation by TBK1 leads to activation and production of IFN-beta. Following cyclic nucleotide (c-di-GMP or cGAMP)-binding, activation and translocation from the endoplasmic reticulum, STING1 is phosphorylated by TBK1 at Ser-366 in the pLxIS motif. The phosphorylated pLxIS motif constitutes an IRF3-binding motif, leading to recruitment of the transcription factor IRF3 to induce type-I interferons and other cytokines.

The protein localises to the endoplasmic reticulum membrane. Its subcellular location is the cytoplasm. It is found in the perinuclear region. The protein resides in the endoplasmic reticulum-Golgi intermediate compartment membrane. It localises to the golgi apparatus membrane. The protein localises to the cytoplasmic vesicle. Its subcellular location is the autophagosome membrane. The enzyme catalyses H(+)(in) = H(+)(out). Functionally, facilitator of innate immune signaling that acts as a sensor of cytosolic DNA from bacteria and viruses and promotes the production of type I interferon (IFN-alpha and IFN-beta). Innate immune response is triggered in response to non-CpG double-stranded DNA from viruses and bacteria delivered to the cytoplasm. Acts by binding cyclic dinucleotides: recognizes and binds cyclic di-GMP (c-di-GMP), a second messenger produced by bacteria, and cyclic GMP-AMP (cGAMP), a messenger produced by CGAS in response to DNA virus in the cytosol. Upon binding of c-di-GMP or cGAMP, STING1 oligomerizes and is able to activate both NF-kappa-B and IRF3 transcription pathways to induce expression of type I interferon and exert a potent anti-viral state. Exhibits 2',3' phosphodiester linkage-specific ligand recognition: can bind both 2'-3' linked cGAMP and 3'-3' linked cGAMP but is preferentially activated by 2'-3' linked cGAMP. In addition to promote the production of type I interferons, plays a direct role in autophagy. Following cGAMP-binding, STING1 buds from the endoplasmic reticulum into COPII vesicles, which then form the endoplasmic reticulum-Golgi intermediate compartment (ERGIC). The ERGIC serves as the membrane source for LC3 lipidation, leading to formation of autophagosomes that target cytosolic DNA or DNA viruses for degradation by the lysosome. Promotes autophagy by acting as a proton channel that directs proton efflux from the Golgi to facilitate LC3 lipidation. The autophagy- and interferon-inducing activities can be uncoupled and autophagy induction is independent of TBK1 phosphorylation. This Gallus gallus (Chicken) protein is Stimulator of interferon genes protein.